Reading from the N-terminus, the 215-residue chain is NADH-quinone oxidoreductase subunit C (215 aa).

It belongs to the complex I 30 kDa subunit family. As to quaternary structure, NDH-1 is composed of 14 different subunits. Subunits NuoB, C, D, E, F, and G constitute the peripheral sector of the complex.

The protein resides in the cell inner membrane. The enzyme catalyses a quinone + NADH + 5 H(+)(in) = a quinol + NAD(+) + 4 H(+)(out). In terms of biological role, NDH-1 shuttles electrons from NADH, via FMN and iron-sulfur (Fe-S) centers, to quinones in the respiratory chain. The immediate electron acceptor for the enzyme in this species is believed to be ubiquinone. Couples the redox reaction to proton translocation (for every two electrons transferred, four hydrogen ions are translocated across the cytoplasmic membrane), and thus conserves the redox energy in a proton gradient. The sequence is that of NADH-quinone oxidoreductase subunit C from Francisella philomiragia subsp. philomiragia (strain ATCC 25017 / CCUG 19701 / FSC 153 / O#319-036).